We begin with the raw amino-acid sequence, 297 residues long: Farnesyl diphosphate synthase (297 aa).

Positions 47, 50, and 79 each coordinate isopentenyl diphosphate. Residues aspartate 86 and aspartate 92 each contribute to the Mg(2+) site. Arginine 97 is a binding site for (2E)-geranyl diphosphate. Arginine 98 contacts isopentenyl diphosphate. Residues lysine 183, threonine 184, glutamine 221, and lysine 238 each contribute to the (2E)-geranyl diphosphate site.

This sequence belongs to the FPP/GGPP synthase family. Mg(2+) is required as a cofactor.

The protein resides in the cytoplasm. The enzyme catalyses isopentenyl diphosphate + (2E)-geranyl diphosphate = (2E,6E)-farnesyl diphosphate + diphosphate. The chain is Farnesyl diphosphate synthase from Geobacillus stearothermophilus (Bacillus stearothermophilus).